The sequence spans 29 residues: Phospholemman-like protein (29 aa).

Belongs to the FXYD family. Post-translationally, phosphorylated by protein kinase C.

The protein resides in the membrane. Its function is as follows. Induces a hyperpolarization-activated chloride current when expressed in Xenopus oocytes. In Scyliorhinus canicula (Small-spotted catshark), this protein is Phospholemman-like protein.